A 338-amino-acid polypeptide reads, in one-letter code: Limbic system-associated membrane protein (338 aa).

The first 28 residues, 1-28 (MVARAQPDRKQLPLVLLRLLCLLPTGLP), serve as a signal peptide directing secretion. 3 consecutive Ig-like C2-type domains span residues 29-122 (VRSV…PKTS), 132-214 (PKIS…VRVT), and 219-306 (PTIT…LYLY). Asparagine 40, asparagine 66, asparagine 136, and asparagine 148 each carry an N-linked (GlcNAc...) asparagine glycan. A disulfide bridge links cysteine 53 with cysteine 111. Cystine bridges form between cysteine 153–cysteine 197 and cysteine 239–cysteine 290. Residues asparagine 279, asparagine 287, asparagine 300, and asparagine 315 are each glycosylated (N-linked (GlcNAc...) asparagine). Asparagine 315 is lipidated: GPI-anchor amidated asparagine. Positions 316 to 338 (GSVSLAVPLWLLAASLLCLLSKC) are cleaved as a propeptide — removed in mature form.

Belongs to the immunoglobulin superfamily. IgLON family.

The protein localises to the cell membrane. Functionally, mediates selective neuronal growth and axon targeting. Probably serves as a recognition molecule for the formation of limbic connections. This Gallus gallus (Chicken) protein is Limbic system-associated membrane protein.